Here is a 416-residue protein sequence, read N- to C-terminus: Phosphoribosylamine--glycine ligase (416 aa).

The region spanning 105 to 310 (KSFLKKYRIK…PLELILAATQ (206 aa)) is the ATP-grasp domain. An ATP-binding site is contributed by 131–192 (IYSLTPPIVV…EEFLDGYELS (62 aa)). Glu281 and Asn283 together coordinate Mg(2+).

Belongs to the GARS family. Requires Mg(2+) as cofactor. The cofactor is Mn(2+).

The catalysed reaction is 5-phospho-beta-D-ribosylamine + glycine + ATP = N(1)-(5-phospho-beta-D-ribosyl)glycinamide + ADP + phosphate + H(+). It participates in purine metabolism; IMP biosynthesis via de novo pathway; N(1)-(5-phospho-D-ribosyl)glycinamide from 5-phospho-alpha-D-ribose 1-diphosphate: step 2/2. This chain is Phosphoribosylamine--glycine ligase, found in Campylobacter jejuni subsp. jejuni serotype O:2 (strain ATCC 700819 / NCTC 11168).